The primary structure comprises 668 residues: UvrABC system protein B (668 aa).

Positions 31 to 188 constitute a Helicase ATP-binding domain; sequence HGIEAGEKAQ…RKLVNIQFER (158 aa). Position 44-51 (44-51) interacts with ATP; sequence GATGTGKT. A Beta-hairpin motif is present at residues 97–120; it reads YYDYYQPEAYVPSSDTYIEKDSSI. The Helicase C-terminal domain occupies 435 to 601; that stretch reads QMDDLVGEIN…TIIKPIRDLI (167 aa). The region spanning 630–665 is the UVR domain; it reads EKLIARLEDEMRAAAKKLDFEQAASLRDTIMDMKTE.

The protein belongs to the UvrB family. Forms a heterotetramer with UvrA during the search for lesions. Interacts with UvrC in an incision complex.

It is found in the cytoplasm. Functionally, the UvrABC repair system catalyzes the recognition and processing of DNA lesions. A damage recognition complex composed of 2 UvrA and 2 UvrB subunits scans DNA for abnormalities. Upon binding of the UvrA(2)B(2) complex to a putative damaged site, the DNA wraps around one UvrB monomer. DNA wrap is dependent on ATP binding by UvrB and probably causes local melting of the DNA helix, facilitating insertion of UvrB beta-hairpin between the DNA strands. Then UvrB probes one DNA strand for the presence of a lesion. If a lesion is found the UvrA subunits dissociate and the UvrB-DNA preincision complex is formed. This complex is subsequently bound by UvrC and the second UvrB is released. If no lesion is found, the DNA wraps around the other UvrB subunit that will check the other stand for damage. This is UvrABC system protein B from Levilactobacillus brevis (strain ATCC 367 / BCRC 12310 / CIP 105137 / JCM 1170 / LMG 11437 / NCIMB 947 / NCTC 947) (Lactobacillus brevis).